Consider the following 580-residue polypeptide: Adenine deaminase 2 (580 aa).

It belongs to the metallo-dependent hydrolases superfamily. Adenine deaminase family. Requires Mn(2+) as cofactor.

The catalysed reaction is adenine + H2O + H(+) = hypoxanthine + NH4(+). This chain is Adenine deaminase 2, found in Latilactobacillus sakei subsp. sakei (strain 23K) (Lactobacillus sakei subsp. sakei).